The following is an 848-amino-acid chain: Paramyosin (848 aa).

The interval 1-9 (AFGSMSVAD) is nonhelical region. The stretch at 10–833 (LGSLTRLEDK…HLIRAKHRSS (824 aa)) forms a coiled coil. The interval 834 to 848 (VVTGKNASASKIYVL) is nonhelical region.

It belongs to the paramyosin family. Homodimer.

The protein resides in the cytoplasm. It localises to the myofibril. Paramyosin is a major structural component of many thick filaments isolated from invertebrate muscles. In Dirofilaria immitis (Canine heartworm), this protein is Paramyosin.